Consider the following 236-residue polypeptide: Phosphoglycolate phosphatase (236 aa).

Aspartate 23 acts as the Nucleophile in catalysis. Mg(2+)-binding residues include aspartate 23 and aspartate 25. Lysine 162 contacts substrate. The Mg(2+) site is built by aspartate 185 and aspartate 189.

The protein belongs to the archaeal SPP-like hydrolase family. Mg(2+) serves as cofactor.

It catalyses the reaction 2-phosphoglycolate + H2O = glycolate + phosphate. Its function is as follows. Catalyzes the dephosphorylation of 2-phosphoglycolate. The sequence is that of Phosphoglycolate phosphatase from Picrophilus torridus (strain ATCC 700027 / DSM 9790 / JCM 10055 / NBRC 100828 / KAW 2/3).